Consider the following 233-residue polypeptide: Biosynthetic peptidoglycan transglycosylase (233 aa).

A helical membrane pass occupies residues 8–28; sequence LIALPVGIFIFFNAYVYGNII.

The protein belongs to the glycosyltransferase 51 family.

It is found in the cell inner membrane. It carries out the reaction [GlcNAc-(1-&gt;4)-Mur2Ac(oyl-L-Ala-gamma-D-Glu-L-Lys-D-Ala-D-Ala)](n)-di-trans,octa-cis-undecaprenyl diphosphate + beta-D-GlcNAc-(1-&gt;4)-Mur2Ac(oyl-L-Ala-gamma-D-Glu-L-Lys-D-Ala-D-Ala)-di-trans,octa-cis-undecaprenyl diphosphate = [GlcNAc-(1-&gt;4)-Mur2Ac(oyl-L-Ala-gamma-D-Glu-L-Lys-D-Ala-D-Ala)](n+1)-di-trans,octa-cis-undecaprenyl diphosphate + di-trans,octa-cis-undecaprenyl diphosphate + H(+). Its pathway is cell wall biogenesis; peptidoglycan biosynthesis. In terms of biological role, peptidoglycan polymerase that catalyzes glycan chain elongation from lipid-linked precursors. This chain is Biosynthetic peptidoglycan transglycosylase, found in Neisseria meningitidis serogroup A / serotype 4A (strain DSM 15465 / Z2491).